The sequence spans 253 residues: Tryptophan synthase alpha chain (253 aa).

Active-site proton acceptor residues include glutamate 47 and aspartate 58.

Belongs to the TrpA family. Tetramer of two alpha and two beta chains.

The catalysed reaction is (1S,2R)-1-C-(indol-3-yl)glycerol 3-phosphate + L-serine = D-glyceraldehyde 3-phosphate + L-tryptophan + H2O. It participates in amino-acid biosynthesis; L-tryptophan biosynthesis; L-tryptophan from chorismate: step 5/5. Functionally, the alpha subunit is responsible for the aldol cleavage of indoleglycerol phosphate to indole and glyceraldehyde 3-phosphate. This is Tryptophan synthase alpha chain from Lactococcus lactis subsp. lactis (strain IL1403) (Streptococcus lactis).